The sequence spans 80 residues: Metallothionein-like protein BIF98 (80 aa).

It belongs to the metallothionein superfamily. Type 15 family.

Functionally, metallothioneins have a high content of cysteine residues that bind various heavy metals. The sequence is that of Metallothionein-like protein BIF98 from Brassica rapa subsp. pekinensis (Chinese cabbage).